A 251-amino-acid polypeptide reads, in one-letter code: Flap endonuclease Xni (251 aa).

Asp104 contributes to the Mg(2+) binding site. Positions 160–249 (VQPQQLPDYW…IDGNLQQLRL (90 aa)) constitute a 5'-3' exonuclease domain. 5 residues coordinate K(+): Leu171, Ala172, Pro180, Val182, and Ile185. The tract at residues 184–189 (GIGPKS) is interaction with DNA.

This sequence belongs to the Xni family. Mg(2+) serves as cofactor. K(+) is required as a cofactor.

Its function is as follows. Has flap endonuclease activity. During DNA replication, flap endonucleases cleave the 5'-overhanging flap structure that is generated by displacement synthesis when DNA polymerase encounters the 5'-end of a downstream Okazaki fragment. The chain is Flap endonuclease Xni from Escherichia coli O7:K1 (strain IAI39 / ExPEC).